We begin with the raw amino-acid sequence, 337 residues long: MANRGGRHARTEDSDNTINYVQCDGLAVMKMVKHCHEESSNMDLAQGALLGLVVDKCLEITNCFPFPKSGDETMDEEMYQLTVMRRLRRVNVDHLHVGWYQSSDVGNSLSLALLESQYHYQTSIEESVVVVYDTQKSARGFLCLKAYRLTPQAIQMYKDGDFTPEAFRTLKVGYESLFAEIPIVIKNSPLTNIMMSELNELLPEDKGHNFLDLGTASVLENHMRSLIERVDELYQEAVRYNKYQQVVFKQDSDKNRALAKLAAENAVRTSKGEPTVAEEEVIKQFRPMPVPARLTATITSGQINTHSQHIAQFCSQSLAKLFITESLQNAKEAKEIK.

The region spanning 21–153 is the MPN domain; that stretch reads VQCDGLAVMK…LKAYRLTPQA (133 aa).

It belongs to the eIF-3 subunit H family. Component of the eukaryotic translation initiation factor 3 (eIF-3) complex. The eIF-3 complex interacts with pix. Interacts with mxt.

It localises to the cytoplasm. Component of the eukaryotic translation initiation factor 3 (eIF-3) complex, which is involved in protein synthesis of a specialized repertoire of mRNAs and, together with other initiation factors, stimulates binding of mRNA and methionyl-tRNAi to the 40S ribosome. The eIF-3 complex specifically targets and initiates translation of a subset of mRNAs involved in cell proliferation. The protein is Eukaryotic translation initiation factor 3 subunit H of Drosophila pseudoobscura pseudoobscura (Fruit fly).